The primary structure comprises 243 residues: 4-hydroxy-tetrahydrodipicolinate reductase (243 aa).

NAD(+) is bound by residues 9 to 14 (GANGKM), 78 to 80 (GTS), and 104 to 107 (APNF). Catalysis depends on His134, which acts as the Proton donor/acceptor. His135 is a binding site for (S)-2,3,4,5-tetrahydrodipicolinate. The Proton donor role is filled by Lys138. 144 to 145 (GT) is a binding site for (S)-2,3,4,5-tetrahydrodipicolinate.

The protein belongs to the DapB family.

Its subcellular location is the cytoplasm. It carries out the reaction (S)-2,3,4,5-tetrahydrodipicolinate + NAD(+) + H2O = (2S,4S)-4-hydroxy-2,3,4,5-tetrahydrodipicolinate + NADH + H(+). The enzyme catalyses (S)-2,3,4,5-tetrahydrodipicolinate + NADP(+) + H2O = (2S,4S)-4-hydroxy-2,3,4,5-tetrahydrodipicolinate + NADPH + H(+). It functions in the pathway amino-acid biosynthesis; L-lysine biosynthesis via DAP pathway; (S)-tetrahydrodipicolinate from L-aspartate: step 4/4. Functionally, catalyzes the conversion of 4-hydroxy-tetrahydrodipicolinate (HTPA) to tetrahydrodipicolinate. This Legionella pneumophila (strain Lens) protein is 4-hydroxy-tetrahydrodipicolinate reductase.